The following is a 541-amino-acid chain: MTVMEHTKAAQIDLTKHGLTGVTEVLRNPSYEQLFVEETLPGLEGYEKGVVTELGSVAVDTGIFTGRSPKDKYIVKDDTTRDTMWWSDQGKNDNKPITTEVWDELKELVTTQLSGKRLFVIDGYCGANPDTRLSVRIITEVAWQAHFVKNMFIRPTDEELATFEPDFVVMNGAKTTNPNWEKQGLNSENFVAFNLTERVQIIGGTWYGGEMKKGMFAMMNYLLPLQGIASMHCSANVGEEGDVAIFFGLSGTGKTTLSTDPKRELIGDDEHGWDDDGIFNFEGGCYAKTIRLSKEAEPEIYNAIRRDALLENVTVRGDGSIDFDDGSKTENTRVSYPIHHIDNIVKPVSKAGHAQKVIFLTADAFGVLPPVSKLTPEQTKYHFLSGFTAKLAGTERGITEPTPTFSAAFGAAFLTLHPTQYAEVLVKRMEAAGAEAYLVNTGWNGTGKRISIQDTRGIIDAILDGSIDQAETKVIPMFNLEVPLALHDVDPAILDPRDTYTDPLQWESKAKDLAERFINNFDKYTDNAEGKSLVAAGPQLD.

3 residues coordinate substrate: arginine 67, tyrosine 207, and lysine 213. Residues lysine 213, histidine 232, and glycine 248–threonine 256 each bind ATP. The Mn(2+) site is built by lysine 213 and histidine 232. Aspartate 269 provides a ligand contact to Mn(2+). Residues glutamate 297, arginine 333, arginine 449–isoleucine 450, and threonine 455 each bind ATP. Residue arginine 333 coordinates substrate.

Belongs to the phosphoenolpyruvate carboxykinase (ATP) family. In terms of assembly, monomer. Mn(2+) is required as a cofactor.

It is found in the cytoplasm. It catalyses the reaction oxaloacetate + ATP = phosphoenolpyruvate + ADP + CO2. The protein operates within carbohydrate biosynthesis; gluconeogenesis. Functionally, involved in the gluconeogenesis. Catalyzes the conversion of oxaloacetate (OAA) to phosphoenolpyruvate (PEP) through direct phosphoryl transfer between the nucleoside triphosphate and OAA. In Vibrio atlanticus (strain LGP32) (Vibrio splendidus (strain Mel32)), this protein is Phosphoenolpyruvate carboxykinase (ATP).